A 313-amino-acid chain; its full sequence is tRNA dimethylallyltransferase (313 aa).

17–24 is an ATP binding site; the sequence is GPTASGKT. Residue 19–24 coordinates substrate; that stretch reads TASGKT. 3 interaction with substrate tRNA regions span residues 42–45, 166–170, and 247–252; these read DSAL, QRLSR, and RCVGYR.

Belongs to the IPP transferase family. Monomer. It depends on Mg(2+) as a cofactor.

It carries out the reaction adenosine(37) in tRNA + dimethylallyl diphosphate = N(6)-dimethylallyladenosine(37) in tRNA + diphosphate. Its function is as follows. Catalyzes the transfer of a dimethylallyl group onto the adenine at position 37 in tRNAs that read codons beginning with uridine, leading to the formation of N6-(dimethylallyl)adenosine (i(6)A). The polypeptide is tRNA dimethylallyltransferase (Serratia proteamaculans (strain 568)).